Reading from the N-terminus, the 183-residue chain is Acireductone dioxygenase (183 aa).

Fe(2+)-binding residues include His-99, His-101, Glu-105, and His-144. His-99, His-101, Glu-105, and His-144 together coordinate Ni(2+).

It belongs to the acireductone dioxygenase (ARD) family. Monomer. Fe(2+) serves as cofactor. The cofactor is Ni(2+).

The catalysed reaction is 1,2-dihydroxy-5-(methylsulfanyl)pent-1-en-3-one + O2 = 3-(methylsulfanyl)propanoate + CO + formate + 2 H(+). It catalyses the reaction 1,2-dihydroxy-5-(methylsulfanyl)pent-1-en-3-one + O2 = 4-methylsulfanyl-2-oxobutanoate + formate + 2 H(+). The protein operates within amino-acid biosynthesis; L-methionine biosynthesis via salvage pathway; L-methionine from S-methyl-5-thio-alpha-D-ribose 1-phosphate: step 5/6. Functionally, catalyzes 2 different reactions between oxygen and the acireductone 1,2-dihydroxy-3-keto-5-methylthiopentene (DHK-MTPene) depending upon the metal bound in the active site. Fe-containing acireductone dioxygenase (Fe-ARD) produces formate and 2-keto-4-methylthiobutyrate (KMTB), the alpha-ketoacid precursor of methionine in the methionine recycle pathway. Ni-containing acireductone dioxygenase (Ni-ARD) produces methylthiopropionate, carbon monoxide and formate, and does not lie on the methionine recycle pathway. This chain is Acireductone dioxygenase, found in Microcystis aeruginosa.